The sequence spans 176 residues: Macro domain-containing protein mll7730 (176 aa).

One can recognise a Macro domain in the interval 1-174 (MSKALDRIRI…LYLRAVAALR (174 aa)).

It belongs to the MacroD-type family.

The chain is Macro domain-containing protein mll7730 from Mesorhizobium japonicum (strain LMG 29417 / CECT 9101 / MAFF 303099) (Mesorhizobium loti (strain MAFF 303099)).